Reading from the N-terminus, the 456-residue chain is Perilipin-5 (456 aa).

The interval 1–20 (MSEDEAAQAPGPSLSEQDQQ) is disordered. Positions 1 to 108 (MSEDEAAQAP…KLEEKLPFLQ (108 aa)) are interaction with LIPE. The segment at 1–173 (MSEDEAAQAP…HFLPMTEEEL (173 aa)) is essential for lipid droplet targeting. Residues Ser-2, Ser-148, and Ser-324 each carry the phosphoserine modification. Residues 185 to 456 (VGSVEEQRKH…KHTLMPELDF (272 aa)) are interaction with PNPLA2 and ABHD5. The segment at 420–456 (AWQAQHGEGTVLSGNIPEEEPEPPSRPKHTLMPELDF) is disordered. The tract at residues 438–456 (EEPEPPSRPKHTLMPELDF) is recruits mitochondria at the lipid droplet surface.

The protein belongs to the perilipin family. Homooligomer. Interacts with PNPLA2; prevents interaction of PNPLA2 with ABHD5. Interacts with ABHD5; targets ABHD5 to lipid droplets and promotes interaction of ABHD5 with PNPLA2. Interacts with LIPE. In terms of processing, phosphorylated by PKA. Phosphorylated on serine in skeletal muscle at rest or upon lipolytic stimulation.

The protein localises to the lipid droplet. It is found in the cytoplasm. The protein resides in the mitochondrion. Functionally, lipid droplet-associated protein that maintains the balance between lipogenesis and lipolysis and also regulates fatty acid oxidation in oxidative tissues. Recruits mitochondria to the surface of lipid droplets and is involved in lipid droplet homeostasis by regulating both the storage of fatty acids in the form of triglycerides and the release of fatty acids for mitochondrial fatty acid oxidation. In lipid droplet triacylglycerol hydrolysis, plays a role as a scaffolding protein for three major key lipolytic players: ABHD5, PNPLA2 and LIPE. Reduces the triacylglycerol hydrolase activity of PNPLA2 by recruiting and sequestering PNPLA2 to lipid droplets. Phosphorylation by PKA enables lipolysis probably by promoting release of ABHD5 from the perilipin scaffold and by facilitating interaction of ABHD5 with PNPLA2. Also increases lipolysis through interaction with LIPE and upon PKA-mediated phosphorylation of LIPE. The polypeptide is Perilipin-5 (Plin5) (Ovis aries (Sheep)).